The primary structure comprises 1292 residues: Zinc finger protein 423 (1292 aa).

The segment covering 1-11 (MSRRKQAKPRS) has biased composition (basic residues). Disordered stretches follow at residues 1–21 (MSRR…EASD), 33–70 (AGGL…EDVE), and 95–125 (AHRC…SPTQ). Residues 41–54 (ECDRKTSRALEDRN) are compositionally biased toward basic and acidic residues. Residues Ser-55 and Ser-58 each carry the phosphoserine modification. The segment at 75–101 (YTCDHCQQDFESLADLTDHRAHRCPGD) adopts a C2H2-type 1; degenerate zinc-finger fold. Residues 110 to 125 (WVASSPSSKDVASPTQ) are compositionally biased toward polar residues. C2H2-type zinc fingers lie at residues 146-168 (YPCQ…EQIH), 174-196 (FKCT…IKLH), 202-224 (YHCH…LKTH), 230-252 (FKCS…MQAH), 271-294 (FMCD…LTLH), 303-326 (LQCI…HQAH), and 331-353 (HKCP…LDSH). The tract at residues 354–407 (RQPDSSNHSVSPDPVLGSVASMSSATPDSSASVERGSTPDSTLKPLRGQKKMRD) is disordered. Over residues 371-385 (SVASMSSATPDSSAS) the composition is skewed to low complexity. Residues 417–441 (YSCPYCSKRDFTSLAVLEIHLKTIH) form a C2H2-type 9; degenerate zinc finger. 3 consecutive C2H2-type zinc fingers follow at residues 449-472 (HTCQ…RKLH), 488-511 (FHCN…RVSH), and 525-548 (FFCN…QQAH). A C2H2-type 13; atypical zinc finger spans residues 571–596 (YSCPYCTNSPIFGSILKLTKHIKENH). The segment at 598–635 (NIPLAHSKKSKAEQSPVSSDVEVSSPKRQRLSGSANSI) is disordered. Position 612 is a phosphoserine (Ser-612). The segment covering 612-623 (SPVSSDVEVSSP) has biased composition (low complexity). C2H2-type zinc fingers lie at residues 640-662 (YPCN…LKLH), 670-692 (QACP…LTVH), 700-723 (YVCE…LDMH), 728-751 (YHCT…AVKH), 758-781 (YRCT…KHSH), 789-811 (HKCI…ITTH), and 815-838 (YNCR…REKH). The segment at 894–916 (YGCDICGAAYTMEVLLQNHRLRD) adopts a C2H2-type 21; degenerate zinc-finger fold. C2H2-type zinc fingers lie at residues 938–960 (HKCN…LQTH), 967–989 (YMCP…KVTH), and 1028–1050 (FRCV…GTFH). Phosphoserine is present on Ser-1062. Residues 1072 to 1090 (YKCALCLKEFRSKQDLVRL) form a C2H2-type 25; degenerate zinc finger. C2H2-type zinc fingers lie at residues 1128-1151 (LRCP…QVDH), 1176-1198 (YQCI…VANH), 1206-1228 (HECK…LIEH), 1237-1260 (FKCP…FAVH), and 1267-1290 (YDCS…MSQH). A compositionally biased stretch (basic and acidic residues) spans 1144-1155 (ESHMQVDHRDLT). The tract at residues 1144 to 1171 (ESHMQVDHRDLTPETSGPRKGAQTSPVP) is disordered.

The protein belongs to the krueppel C2H2-type zinc-finger protein family. As to quaternary structure, homodimer. Interacts with SMAD1 and SMAD4. Interacts with EBF1. Interacts with PARP1. Interacts with CEP290. Within the cerebellum, Zfp423 is expressed in both ventricular and external germinal zones. Transiently expressed in newly differentiating olfactory-receptor neurons.

It localises to the nucleus. Transcription factor that can both act as an activator or a repressor depending on the context. Plays a central role in BMP signaling and olfactory neurogenesis. Associates with SMADs in response to BMP2 leading to activate transcription of BMP target genes. Acts as a transcriptional repressor via its interaction with EBF1, a transcription factor involved in terminal olfactory receptor neurons differentiation; this interaction preventing EBF1 to bind DNA and activate olfactory-specific genes. Involved in olfactory neurogenesis by participating in a developmental switch that regulates the transition from differentiation to maturation in olfactory receptor neurons. Controls proliferation and differentiation of neural precursors in cerebellar vermis formation. This chain is Zinc finger protein 423 (Znf423), found in Mus musculus (Mouse).